Reading from the N-terminus, the 279-residue chain is Biotin synthase (279 aa).

Residues lysine 2 to arginine 228 form the Radical SAM core domain. [4Fe-4S] cluster is bound by residues cysteine 17, cysteine 21, and cysteine 24. Cysteine 61, cysteine 96, cysteine 154, and arginine 221 together coordinate [2Fe-2S] cluster.

This sequence belongs to the radical SAM superfamily. Biotin synthase family. As to quaternary structure, homodimer. [4Fe-4S] cluster serves as cofactor. Requires [2Fe-2S] cluster as cofactor.

It carries out the reaction (4R,5S)-dethiobiotin + (sulfur carrier)-SH + 2 reduced [2Fe-2S]-[ferredoxin] + 2 S-adenosyl-L-methionine = (sulfur carrier)-H + biotin + 2 5'-deoxyadenosine + 2 L-methionine + 2 oxidized [2Fe-2S]-[ferredoxin]. Its pathway is cofactor biosynthesis; biotin biosynthesis; biotin from 7,8-diaminononanoate: step 2/2. Functionally, catalyzes the conversion of dethiobiotin (DTB) to biotin by the insertion of a sulfur atom into dethiobiotin via a radical-based mechanism. The polypeptide is Biotin synthase (Campylobacter curvus (strain 525.92)).